The primary structure comprises 550 residues: Cytokinin dehydrogenase 10 (550 aa).

The first 26 residues, 1-26 (MMPRAQLTTFLIVTSFLSTVPYLRAP), serve as a signal peptide directing secretion. The 182-residue stretch at 64–245 (VHATPNGVFR…TRARIRLEPA (182 aa)) folds into the FAD-binding PCMH-type domain. Residues Gly100, Lys101, and Gly102 each contribute to the FAD site. Residue His103 is modified to Pros-8alpha-FAD histidine. Residues Ser104, Gln108, Asp169, Thr174, Ser180, Ile184, and Ile235 each contribute to the FAD site. Residue Asn289 is glycosylated (N-linked (GlcNAc...) asparagine). Tyr489, Ser524, and Gln527 together coordinate FAD. The tract at residues 523–550 (LSPGQGIFPPPPPPSPPPPAAGEPITAS) is disordered. The segment covering 530–543 (FPPPPPPSPPPPAA) has biased composition (pro residues).

This sequence belongs to the oxygen-dependent FAD-linked oxidoreductase family. In terms of assembly, monomer. FAD serves as cofactor.

It is found in the secreted. It localises to the extracellular space. It carries out the reaction N(6)-dimethylallyladenine + A + H2O = 3-methyl-2-butenal + adenine + AH2. Its function is as follows. Catalyzes the oxidation of cytokinins, a family of N(6)-substituted adenine derivatives that are plant hormones, where the substituent is an isopentenyl group. This Oryza sativa subsp. japonica (Rice) protein is Cytokinin dehydrogenase 10 (CKX10).